We begin with the raw amino-acid sequence, 296 residues long: Nitrogenase iron protein 1 (296 aa).

11–18 (GKGGIGKS) is an ATP binding site. Residue cysteine 99 coordinates [4Fe-4S] cluster. Arginine 102 carries the post-translational modification ADP-ribosylarginine; by dinitrogenase reductase ADP-ribosyltransferase. Residue cysteine 133 participates in [4Fe-4S] cluster binding.

The protein belongs to the NifH/BchL/ChlL family. As to quaternary structure, homodimer. The cofactor is [4Fe-4S] cluster. In terms of processing, the reversible ADP-ribosylation of Arg-102 inactivates the nitrogenase reductase and regulates nitrogenase activity.

The catalysed reaction is N2 + 8 reduced [2Fe-2S]-[ferredoxin] + 16 ATP + 16 H2O = H2 + 8 oxidized [2Fe-2S]-[ferredoxin] + 2 NH4(+) + 16 ADP + 16 phosphate + 6 H(+). The key enzymatic reactions in nitrogen fixation are catalyzed by the nitrogenase complex, which has 2 components: the iron protein and the molybdenum-iron protein. This is Nitrogenase iron protein 1 (nifH1) from Azorhizobium caulinodans (strain ATCC 43989 / DSM 5975 / JCM 20966 / LMG 6465 / NBRC 14845 / NCIMB 13405 / ORS 571).